The following is a 113-amino-acid chain: Iron-sulfur cluster insertion protein ErpA (113 aa).

Iron-sulfur cluster-binding residues include C41, C105, and C107.

This sequence belongs to the HesB/IscA family. Homodimer. Requires iron-sulfur cluster as cofactor.

Its function is as follows. Required for insertion of 4Fe-4S clusters for at least IspG. The polypeptide is Iron-sulfur cluster insertion protein ErpA (Actinobacillus pleuropneumoniae serotype 7 (strain AP76)).